The primary structure comprises 90 residues: Major mite allergen Der p 23 (90 aa).

The signal sequence occupies residues 1–21 (MKFNIIIVFISLAILVHSSYA). Residues 22–42 (ANDNDDDPTTTVHPTTTEQPD) form a disordered region. Residues 30-39 (TTTVHPTTTE) are compositionally biased toward low complexity. The Chitin-binding type-2 domain occupies 44-90 (KFECPSRFGYFADPKDPHKFYICSNWEAVHKDCPGNTRWNEDEETCT). 2 disulfides stabilise this stretch: Cys47/Cys66 and Cys76/Cys89. An important for IgE-binding region spans residues 52–90 (GYFADPKDPHKFYICSNWEAVHKDCPGNTRWNEDEETCT).

Monomer. Expressed in epithelial cells of the midgut.

Its subcellular location is the secreted. The protein resides in the endoplasmic reticulum. It localises to the cytoplasmic vesicle. Functionally, does not bind chitin in vitro. In Dermatophagoides pteronyssinus (European house dust mite), this protein is Major mite allergen Der p 23.